A 138-amino-acid polypeptide reads, in one-letter code: Thyrotropin subunit beta (138 aa).

Positions 1 to 20 are cleaved as a signal peptide; the sequence is MTATFLMSLLFGLAFGQTMS. 6 cysteine pairs are disulfide-bonded: cysteine 22-cysteine 72, cysteine 36-cysteine 87, cysteine 39-cysteine 125, cysteine 47-cysteine 103, cysteine 51-cysteine 105, and cysteine 108-cysteine 115. The N-linked (GlcNAc...) asparagine glycan is linked to asparagine 43. Positions 133–138 are excised as a propeptide; sequence LVGFPV.

The protein belongs to the glycoprotein hormones subunit beta family. As to quaternary structure, heterodimer of a common alpha chain and a unique beta chain which confers biological specificity to thyrotropin, lutropin, follitropin and gonadotropin.

Its subcellular location is the secreted. Indispensable for the control of thyroid structure and metabolism. The protein is Thyrotropin subunit beta (TSHB) of Monodelphis domestica (Gray short-tailed opossum).